The following is a 69-amino-acid chain: Large ribosomal subunit protein uL29 (69 aa).

This sequence belongs to the universal ribosomal protein uL29 family.

The protein is Large ribosomal subunit protein uL29 of Mycoplasmopsis agalactiae (strain NCTC 10123 / CIP 59.7 / PG2) (Mycoplasma agalactiae).